The chain runs to 299 residues: GTPase Era (299 aa).

In terms of domain architecture, Era-type G spans 5-172 (KSGFVSIIGR…IDVLKTYLPE (168 aa)). The G1 stretch occupies residues 13–20 (GRPNVGKS). 13–20 (GRPNVGKS) contributes to the GTP binding site. A G2 region spans residues 39–43 (QTTRN). The interval 60–63 (DTPG) is G3. Residues 60–64 (DTPGI) and 122–125 (NKID) each bind GTP. Residues 122 to 125 (NKID) form a G4 region. The G5 stretch occupies residues 151-153 (ISA). In terms of domain architecture, KH type-2 spans 203–280 (TSEEIPHAIG…YLELWVKVQR (78 aa)).

This sequence belongs to the TRAFAC class TrmE-Era-EngA-EngB-Septin-like GTPase superfamily. Era GTPase family. As to quaternary structure, monomer.

It localises to the cytoplasm. Its subcellular location is the cell membrane. Its function is as follows. An essential GTPase that binds both GDP and GTP, with rapid nucleotide exchange. Plays a role in 16S rRNA processing and 30S ribosomal subunit biogenesis and possibly also in cell cycle regulation and energy metabolism. The protein is GTPase Era of Staphylococcus aureus (strain bovine RF122 / ET3-1).